The sequence spans 136 residues: MARTKQTARKSTGGKAPRKQLATKAARKSAPATGGVKKPHRYRPGTVALREIRRYQKSTELLIRKLPFQRLVREIAQDFKTELRFQSSAVMALQEASEAYLVGLFEDTNLCAIHAKRVTIMPKDIQLARRIRGERA.

A disordered region spans residues Met1–Arg43. An N6-methylated lysine modification is found at Lys5. Lys10 carries the post-translational modification N6-acetyllysine; alternate. Position 10 is an N6-methylated lysine; alternate (Lys10). Ser11 is modified (phosphoserine). Lys15 and Lys24 each carry N6-acetyllysine. N6-methylated lysine is present on residues Lys28, Lys37, and Lys80.

This sequence belongs to the histone H3 family. As to quaternary structure, the nucleosome is a histone octamer containing two molecules each of H2A, H2B, H3 and H4 assembled in one H3-H4 heterotetramer and two H2A-H2B heterodimers. The octamer wraps approximately 147 bp of DNA. Acetylation is generally linked to gene activation. Post-translationally, methylation at Lys-5 is linked to gene activation. Methylation at Lys-10 is linked to gene repression.

Its subcellular location is the nucleus. It localises to the chromosome. Its function is as follows. Core component of nucleosome. Nucleosomes wrap and compact DNA into chromatin, limiting DNA accessibility to the cellular machineries which require DNA as a template. Histones thereby play a central role in transcription regulation, DNA repair, DNA replication and chromosomal stability. DNA accessibility is regulated via a complex set of post-translational modifications of histones, also called histone code, and nucleosome remodeling. The sequence is that of Histone H3, embryonic from Paracentrotus lividus (Common sea urchin).